The chain runs to 296 residues: Guided entry of tail-anchored proteins factor CAMLG (296 aa).

A disordered region spans residues Met-1–Pro-79. Residues Met-1–Arg-189 lie on the Cytoplasmic side of the membrane. Ser-55 carries the post-translational modification Phosphoserine. The segment covering Ser-61–Lys-72 has biased composition (basic and acidic residues). Residues Ile-190–Val-207 form a helical membrane-spanning segment. The Lumenal segment spans residues Cys-208–Ser-212. Cysteines 208 and 284 form a disulfide. Residues Ile-213–Phe-231 form a helical membrane-spanning segment. At Pro-232–Glu-269 the chain is on the cytoplasmic side. The chain crosses the membrane as a helical span at residues Val-270–Leu-288. At Asp-289–Pro-296 the chain is on the lumenal side.

As to quaternary structure, component of the Golgi to ER traffic (GET) complex, which is composed of GET1/WRB, CAMLG/GET2 and GET3/TRC40. Within the complex, GET1 and CAMLG form a heterotetramer which is stabilized by phosphatidylinositol binding and which binds to the GET3 homodimer. Interacts (via C-terminus) with GET1. Interacts (via N-terminus) with GET3. GET3 shows a higher affinity for CAMLG than for GET1. Interacts (via N-terminus) with TNFRSF13B/TACI (via C-terminus). (Microbial infection) Interacts with human herpes virus 8/HHV-8 protein K7; this interaction modulates intracellular calcium concentration. As to expression, ubiquitous. Highest levels in brain, testis and ovary.

The protein resides in the endoplasmic reticulum membrane. In terms of biological role, required for the post-translational delivery of tail-anchored (TA) proteins to the endoplasmic reticulum. Together with GET1/WRB, acts as a membrane receptor for soluble GET3/TRC40, which recognizes and selectively binds the transmembrane domain of TA proteins in the cytosol. Required for the stability of GET1. Stimulates calcium signaling in T cells through its involvement in elevation of intracellular calcium. Essential for the survival of peripheral follicular B cells. This Homo sapiens (Human) protein is Guided entry of tail-anchored proteins factor CAMLG.